The primary structure comprises 200 residues: N-(5'-phosphoribosyl)anthranilate isomerase (200 aa).

The protein belongs to the TrpF family.

The enzyme catalyses N-(5-phospho-beta-D-ribosyl)anthranilate = 1-(2-carboxyphenylamino)-1-deoxy-D-ribulose 5-phosphate. It participates in amino-acid biosynthesis; L-tryptophan biosynthesis; L-tryptophan from chorismate: step 3/5. The sequence is that of N-(5'-phosphoribosyl)anthranilate isomerase from Endomicrobium trichonymphae.